A 353-amino-acid polypeptide reads, in one-letter code: Alanine racemase (353 aa).

Lysine 34 (proton acceptor; specific for D-alanine) is an active-site residue. Lysine 34 bears the N6-(pyridoxal phosphate)lysine mark. Substrate is bound at residue arginine 128. Tyrosine 251 functions as the Proton acceptor; specific for L-alanine in the catalytic mechanism. Methionine 299 contacts substrate.

The protein belongs to the alanine racemase family. It depends on pyridoxal 5'-phosphate as a cofactor.

It catalyses the reaction L-alanine = D-alanine. The protein operates within amino-acid biosynthesis; D-alanine biosynthesis; D-alanine from L-alanine: step 1/1. Its function is as follows. Catalyzes the interconversion of L-alanine and D-alanine. May also act on other amino acids. This chain is Alanine racemase (alr), found in Alcanivorax borkumensis (strain ATCC 700651 / DSM 11573 / NCIMB 13689 / SK2).